The primary structure comprises 387 residues: Succinate--CoA ligase [ADP-forming] subunit beta (387 aa).

The ATP-grasp domain occupies 9–236; that stretch reads KGLFAKHNVP…RAATDPLELK (228 aa). ATP-binding positions include Lys-45, 52–54, Ser-94, and Glu-99; that span reads GRG. Mg(2+) contacts are provided by Asn-191 and Asp-205. Residues Asn-256 and 318–320 contribute to the substrate site; that span reads GIT.

The protein belongs to the succinate/malate CoA ligase beta subunit family. Heterotetramer of two alpha and two beta subunits. Mg(2+) serves as cofactor.

It catalyses the reaction succinate + ATP + CoA = succinyl-CoA + ADP + phosphate. The catalysed reaction is GTP + succinate + CoA = succinyl-CoA + GDP + phosphate. It functions in the pathway carbohydrate metabolism; tricarboxylic acid cycle; succinate from succinyl-CoA (ligase route): step 1/1. Its function is as follows. Succinyl-CoA synthetase functions in the citric acid cycle (TCA), coupling the hydrolysis of succinyl-CoA to the synthesis of either ATP or GTP and thus represents the only step of substrate-level phosphorylation in the TCA. The beta subunit provides nucleotide specificity of the enzyme and binds the substrate succinate, while the binding sites for coenzyme A and phosphate are found in the alpha subunit. The sequence is that of Succinate--CoA ligase [ADP-forming] subunit beta from Mycobacterium ulcerans (strain Agy99).